Reading from the N-terminus, the 236-residue chain is Small ribosomal subunit protein uS2c (236 aa).

It belongs to the universal ribosomal protein uS2 family.

The protein resides in the plastid. It localises to the chloroplast. The protein is Small ribosomal subunit protein uS2c (rps2) of Oryza sativa (Rice).